Here is a 1530-residue protein sequence, read N- to C-terminus: DNA-directed RNA polymerase III subunit RPC1 (1530 aa).

Zn(2+) is bound by residues Cys-74, Cys-77, Cys-84, His-87, Cys-114, Cys-117, and Cys-161. Mg(2+) contacts are provided by Asp-503, Asp-505, and Asp-507. Residues 846–858 form a bridging helix region; sequence PTEFFFHTMAGRE. The span at 992-1001 shows a compositional bias: basic and acidic residues; that stretch reads EEQESREDAL. Disordered stretches follow at residues 992-1016 and 1057-1099; these read EEQE…SRPR and NLLN…SKEG.

It belongs to the RNA polymerase beta' chain family. As to quaternary structure, component of the RNA polymerase III (Pol III) complex consisting of 17 subunits.

The protein localises to the nucleus. It carries out the reaction RNA(n) + a ribonucleoside 5'-triphosphate = RNA(n+1) + diphosphate. In terms of biological role, DNA-dependent RNA polymerase catalyzes the transcription of DNA into RNA using the four ribonucleoside triphosphates as substrates. Largest and catalytic core component of RNA polymerase III which synthesizes small RNAs, such as 5S rRNA and tRNAs. Forms the polymerase active center together with the second largest subunit. A single-stranded DNA template strand of the promoter is positioned within the central active site cleft of Pol III. A bridging helix emanates from RPC1 and crosses the cleft near the catalytic site and is thought to promote translocation of Pol III by acting as a ratchet that moves the RNA-DNA hybrid through the active site by switching from straight to bent conformations at each step of nucleotide addition. The chain is DNA-directed RNA polymerase III subunit RPC1 from Trypanosoma brucei brucei.